A 211-amino-acid polypeptide reads, in one-letter code: Beta-crystallin B3 (211 aa).

The tract at residues M1–G21 is disordered. Residues M1–N23 form an N-terminal arm region. Beta/gamma crystallin 'Greek key' domains follow at residues Y24–S63 and G64–Q108. Residues I109–D113 are connecting peptide. Beta/gamma crystallin 'Greek key' domains are found at residues H114–N155 and G156–R198. The tract at residues Q200 to S211 is C-terminal arm.

This sequence belongs to the beta/gamma-crystallin family. Homo/heterodimer, or complexes of higher-order. The structure of beta-crystallin oligomers seems to be stabilized through interactions between the N-terminal arms.

Crystallins are the dominant structural components of the vertebrate eye lens. The protein is Beta-crystallin B3 (CRYBB3) of Gallus gallus (Chicken).